The chain runs to 310 residues: S-methyl-5'-thioadenosine phosphorylase (310 aa).

Phosphate-binding positions include Thr-20, 62 to 63, and 95 to 96; these read RH and SA. Substrate is bound at residue Met-197. Ser-198 serves as a coordination point for phosphate. 221 to 223 provides a ligand contact to substrate; that stretch reads DYD.

It belongs to the PNP/MTAP phosphorylase family. MTAP subfamily. As to quaternary structure, homotrimer.

It localises to the cytoplasm. Its subcellular location is the nucleus. The enzyme catalyses S-methyl-5'-thioadenosine + phosphate = 5-(methylsulfanyl)-alpha-D-ribose 1-phosphate + adenine. Its pathway is amino-acid biosynthesis; L-methionine biosynthesis via salvage pathway; S-methyl-5-thio-alpha-D-ribose 1-phosphate from S-methyl-5'-thioadenosine (phosphorylase route): step 1/1. Its function is as follows. Catalyzes the reversible phosphorylation of S-methyl-5'-thioadenosine (MTA) to adenine and 5-methylthioribose-1-phosphate. Involved in the breakdown of MTA, a major by-product of polyamine biosynthesis. Responsible for the first step in the methionine salvage pathway after MTA has been generated from S-adenosylmethionine. Has broad substrate specificity with 6-aminopurine nucleosides as preferred substrates. In Neurospora crassa (strain ATCC 24698 / 74-OR23-1A / CBS 708.71 / DSM 1257 / FGSC 987), this protein is S-methyl-5'-thioadenosine phosphorylase.